Here is a 638-residue protein sequence, read N- to C-terminus: MNNKLSDFEKNLYKKLKSGKLEVKVSYRTFLCPYCPDNKKKVGLYVDILQHASGVGNSQSKKRSLTEKASHRALAKYLIKDLAHYATSTISKRLKARTSFIPAETGDAPIIYDDAQFEKLVWPWKGVLVNIPTTSTEDGRSCTGESGPKLKDELIRRGFNPIRVRTVWDRFGHSGTGIVEFNRDWNGLQDALVFKKAYEGDGHGKKDWLCGATDSSLYAWLANADDYYRANILGENLRKMGDLKSIYRFAEEEARKDQKLLQRLNFMVENKQYRLKKLQIKYSQDSVKLKYETEEKEKILRAYSEDLTGRQQKSTDHFNRIFADHEKQKVQLESQIKELEIRKLELAKREAENETQRKIVAKELEQNAAINSYVQLSALEQQKTREKAQRLAVDHKMQKEKLHKRIAALERQLDQKQELELEVQQLKSQLSVMRLVELDSGSEIVNKVETFLRDLSETEGELAHLNQFNQDLVVQERKSNDELQEARRALISNLRDMGLHIGVKRMGELDTKPFMKAMRIKYCQEDLEDWAVEVIQLWEEYLKDPDWHPFKRIKLETAETIVEVIDEDDEKLRTLKNELGDDAYQAVANALLEINEYNPSGRYISSELWNFREDRKATLEEGVNSLLEQWNQAKHLKS.

Residues 318 to 497 (FNRIFADHEK…RALISNLRDM (180 aa)) adopt a coiled-coil conformation.

In terms of biological role, acts in association with FDM4 and FDM5 for RNA-directed DNA methylation (RdDM). The protein is Factor of DNA methylation 3 of Arabidopsis thaliana (Mouse-ear cress).